Consider the following 285-residue polypeptide: Heterogeneous nuclear ribonucleoprotein A/B (285 aa).

Residues 1 to 65 form a disordered region; that stretch reads MSDAAEEQPM…NQNGAEGDQI (65 aa). The span at 25 to 43 shows a compositional bias: low complexity; the sequence is EGEAPVEPSAAAAAPAASA. RRM domains follow at residues 75–158 and 159–238; these read GKMF…KDPV and KKIF…QPKE. S87 bears the Phosphoserine mark. Residues K136 and K208 each participate in a glycyl lysine isopeptide (Lys-Gly) (interchain with G-Cter in SUMO2) cross-link. At K220 the chain carries N6-acetyllysine. The tract at residues 239–285 is disordered; the sequence is VYQQQQYGSGGRGNRNRGNRGSGGGQGSTNYGKSQRRGGHQNNYKPY. Phosphoserine is present on S247. A Dimethylated arginine; alternate modification is found at R250. R250 is modified (omega-N-methylarginine; alternate). Residues R255 and R258 each carry the omega-N-methylarginine modification. An N6-acetyllysine modification is found at K271. R275 is modified (dimethylated arginine; alternate). Residue R275 is modified to Omega-N-methylarginine; alternate. R275 bears the Asymmetric dimethylarginine; alternate mark.

In terms of assembly, identified in a IGF2BP1-dependent mRNP granule complex containing untranslated mRNAs. Interacts with APOBEC1. Ubiquitous.

The protein localises to the nucleus. The protein resides in the cytoplasm. Its function is as follows. Transcriptional repressor. Binds to CArG box motifs, single-stranded and double-stranded DNA, and RNA. It may be that repression by CBF-A is a result of competitive binding of CBF, a putative positive factor, and CBF-A to the same or overlapping motifs around the CArG boxes. This chain is Heterogeneous nuclear ribonucleoprotein A/B (Hnrnpab), found in Mus musculus (Mouse).